A 232-amino-acid chain; its full sequence is Small ribosomal subunit protein uS2 (232 aa).

This sequence belongs to the universal ribosomal protein uS2 family.

The polypeptide is Small ribosomal subunit protein uS2 (Pelotomaculum thermopropionicum (strain DSM 13744 / JCM 10971 / SI)).